The following is a 726-amino-acid chain: Catalase-peroxidase (726 aa).

The tryptophyl-tyrosyl-methioninium (Trp-Tyr) (with M-250) cross-link spans 96-224 (WHSAGTYRIA…LAAVMMGLIY (129 aa)). Catalysis depends on H97, which acts as the Proton acceptor. A cross-link (tryptophyl-tyrosyl-methioninium (Tyr-Met) (with W-96)) is located at residues 224-250 (YVNPEGVDGKPDPLKTAHDMRVTFARM). H265 is a binding site for heme b.

It belongs to the peroxidase family. Peroxidase/catalase subfamily. In terms of assembly, homodimer or homotetramer. Heme b serves as cofactor. In terms of processing, formation of the three residue Trp-Tyr-Met cross-link is important for the catalase, but not the peroxidase activity of the enzyme.

The enzyme catalyses H2O2 + AH2 = A + 2 H2O. The catalysed reaction is 2 H2O2 = O2 + 2 H2O. Bifunctional enzyme with both catalase and broad-spectrum peroxidase activity. The polypeptide is Catalase-peroxidase (Vibrio campbellii (strain ATCC BAA-1116)).